The following is a 594-amino-acid chain: ATP-dependent lipid A-core flippase (594 aa).

6 consecutive transmembrane segments (helical) span residues 35–55 (FVLA…IPKV), 64–84 (FGGS…GVAL), 135–155 (AVIF…ITLV), 161–181 (VVAL…VVAV), 262–282 (VTAF…MIQA), and 289–309 (IGGF…LKHL). One can recognise an ABC transmembrane type-1 domain in the interval 36-318 (VLAIIAMGLV…LADLNQPLQR (283 aa)). The 239-residue stretch at 350 to 588 (LVFDNVGFRY…NGLYAGLHRI (239 aa)) folds into the ABC transporter domain. 384-391 (GPSGSGKT) lines the ATP pocket.

This sequence belongs to the ABC transporter superfamily. Lipid exporter (TC 3.A.1.106) family. Homodimer.

It localises to the cell inner membrane. The enzyme catalyses ATP + H2O + lipid A-core oligosaccharideSide 1 = ADP + phosphate + lipid A-core oligosaccharideSide 2.. Involved in lipopolysaccharide (LPS) biosynthesis. Translocates lipid A-core from the inner to the outer leaflet of the inner membrane. Transmembrane domains (TMD) form a pore in the inner membrane and the ATP-binding domain (NBD) is responsible for energy generation. The polypeptide is ATP-dependent lipid A-core flippase (Cupriavidus metallidurans (strain ATCC 43123 / DSM 2839 / NBRC 102507 / CH34) (Ralstonia metallidurans)).